The chain runs to 146 residues: Protein US8.5 (146 aa).

A disordered region spans residues 63–93; that stretch reads LIAIADARGDPPETLPPGAGGAAPACRRPPR. Residues 84–93 are compositionally biased toward low complexity; the sequence is AAPACRRPPR.

The protein belongs to the HHV-1 US8.5 protein family. In terms of processing, phosphorylated.

Its subcellular location is the host nucleus. It localises to the host nucleolus. In Human herpesvirus 2 (strain HG52) (HHV-2), this protein is Protein US8.5.